We begin with the raw amino-acid sequence, 917 residues long: Alanine--tRNA ligase (917 aa).

Residues H615, H619, C719, and H723 each contribute to the Zn(2+) site.

The protein belongs to the class-II aminoacyl-tRNA synthetase family. It depends on Zn(2+) as a cofactor.

It localises to the cytoplasm. The enzyme catalyses tRNA(Ala) + L-alanine + ATP = L-alanyl-tRNA(Ala) + AMP + diphosphate. Functionally, catalyzes the attachment of alanine to tRNA(Ala) in a two-step reaction: alanine is first activated by ATP to form Ala-AMP and then transferred to the acceptor end of tRNA(Ala). Also edits incorrectly charged Ser-tRNA(Ala) and Gly-tRNA(Ala) via its editing domain. In Thermococcus kodakarensis (strain ATCC BAA-918 / JCM 12380 / KOD1) (Pyrococcus kodakaraensis (strain KOD1)), this protein is Alanine--tRNA ligase.